Here is a 96-residue protein sequence, read N- to C-terminus: MDYTQILIKPLVSEKATFVKESSEQVVFFVNPRANKIEIKKAVESVFNVKVAGVNVVTRKPQARTKHGRVTGQTAGYKKAYVTLAPGEKIDFFEGV.

Belongs to the universal ribosomal protein uL23 family. As to quaternary structure, part of the 50S ribosomal subunit. Contacts protein L29, and trigger factor when it is bound to the ribosome.

In terms of biological role, one of the early assembly proteins it binds 23S rRNA. One of the proteins that surrounds the polypeptide exit tunnel on the outside of the ribosome. Forms the main docking site for trigger factor binding to the ribosome. This is Large ribosomal subunit protein uL23 from Oleidesulfovibrio alaskensis (strain ATCC BAA-1058 / DSM 17464 / G20) (Desulfovibrio alaskensis).